The sequence spans 298 residues: MSATPSHIPVLVNECLSLFADRHPKFFCDVTVGAGGHAEAFLSAYPSIVSYDASDRDVAALSMAKEHLEKFGDRVHFHHASFEDLSKDPREHVYDGILADLGVSSMQLDNLSRGFSFQGDDHALDMRMDVTKGITASEVLHTLREEELGKIFREYGEEPQWKNAAKAIVHFRRRKKIVTVRDLKEATAKVFPSYRLRKKIHPLTLIFQALRVYVNQEDVQLKVLLESAMRWLAPGGRLIIISFCSSEDRPVKWFFREAEKSGLGMILTKKVIMPTYEEIRKNPRCRSAKLRCFEKKFL.

S-adenosyl-L-methionine contacts are provided by residues 35-37 (GGH), Asp-55, Phe-82, Asp-100, and Gln-107.

It belongs to the methyltransferase superfamily. RsmH family.

It localises to the cytoplasm. It catalyses the reaction cytidine(1402) in 16S rRNA + S-adenosyl-L-methionine = N(4)-methylcytidine(1402) in 16S rRNA + S-adenosyl-L-homocysteine + H(+). In terms of biological role, specifically methylates the N4 position of cytidine in position 1402 (C1402) of 16S rRNA. This is Ribosomal RNA small subunit methyltransferase H from Chlamydia abortus (strain DSM 27085 / S26/3) (Chlamydophila abortus).